A 389-amino-acid chain; its full sequence is 11-beta-hydroxysteroid dehydrogenase-like 5 (389 aa).

Residues 11-31 (LVAPPATMVVMAFAWPLLSFI) traverse the membrane as a helical; Signal-anchor for type II membrane protein segment. NADP(+)-binding positions include 56–82 (GASSAIGEQIAYEYAKRGANLVLVARR) and Asp107. Ser186 is a substrate binding site. Tyr199 serves as the catalytic Proton acceptor. NADP(+)-binding positions include 199 to 203 (YSAAK) and Lys203. The disordered stretch occupies residues 337 to 381 (LMLEGGPPRVPASPPRYTASPPHYTASPPRYPASPPRYPASPPRF). The segment covering 365–378 (PRYPASPPRYPASP) has biased composition (pro residues).

The protein belongs to the short-chain dehydrogenases/reductases (SDR) family.

It is found in the membrane. This is 11-beta-hydroxysteroid dehydrogenase-like 5 (HSD5) from Arabidopsis thaliana (Mouse-ear cress).